The sequence spans 196 residues: Ribosome maturation factor RimP (196 aa).

Belongs to the RimP family.

The protein resides in the cytoplasm. Functionally, required for maturation of 30S ribosomal subunits. The chain is Ribosome maturation factor RimP from Lawsonia intracellularis (strain PHE/MN1-00).